A 298-amino-acid chain; its full sequence is L-xylulose reductase (298 aa).

The NADP(+) site is built by Ile-19, Asp-68, and Asn-103. Catalysis depends on proton donor residues Ser-161, Ser-162, and Tyr-175. NADP(+) is bound by residues Tyr-175, Lys-179, and Val-207. Catalysis depends on Lys-179, which acts as the Lowers pKa of active site Tyr.

Belongs to the short-chain dehydrogenases/reductases (SDR) family.

The catalysed reaction is xylitol + NADP(+) = L-xylulose + NADPH + H(+). It participates in carbohydrate degradation; L-arabinose degradation via L-arabinitol; D-xylulose 5-phosphate from L-arabinose (fungal route): step 3/5. L-xylulose reductase involved in the catabolism of L-arabinose through an oxidoreductive pathway. Catalyzes the NADPH-dependent reduction of L-xylulose. This is L-xylulose reductase from Aspergillus niger (strain ATCC 1015 / CBS 113.46 / FGSC A1144 / LSHB Ac4 / NCTC 3858a / NRRL 328 / USDA 3528.7).